We begin with the raw amino-acid sequence, 166 residues long: UPF0251 protein UNCMA_27150 (166 aa).

The protein belongs to the UPF0251 family.

In Methanocella arvoryzae (strain DSM 22066 / NBRC 105507 / MRE50), this protein is UPF0251 protein UNCMA_27150.